The primary structure comprises 79 residues: Dolichyl-diphosphooligosaccharide--protein glycosyltransferase subunit TMEM258 (79 aa).

Position 1 is an N-acetylmethionine (M1). The Lumenal segment spans residues 1-16 (MELEAMSRYTSPVNPA). The helical transmembrane segment at 17-37 (VFPHLTVVLLAIGMFFTAWFF) threads the bilayer. Topologically, residues 38–54 (VYEVTSTKYTRDICKEL) are cytoplasmic. A helical membrane pass occupies residues 55–75 (LISLVASLFMGFGVLFLLLWV). At 76 to 79 (GIYV) the chain is on the lumenal side.

The protein belongs to the OST5 family. Component of the oligosaccharyltransferase (OST) complex. OST exists in two different complex forms which contain common core subunits RPN1, RPN2, OST48, OST4, DAD1 and TMEM258, either STT3A or STT3B as catalytic subunits, and form-specific accessory subunits. STT3A complex assembly occurs through the formation of 3 subcomplexes. Subcomplex 1 contains RPN1 and TMEM258, subcomplex 2 contains the STT3A-specific subunits STT3A, DC2/OSTC, and KCP2 as well as the core subunit OST4, and subcomplex 3 contains RPN2, DAD1, and OST48. The STT3A complex can form stable complexes with the Sec61 complex or with both the Sec61 and TRAP complexes.

The protein localises to the membrane. It is found in the endoplasmic reticulum. Its subcellular location is the cytoplasm. Its pathway is protein modification; protein glycosylation. Subunit of the oligosaccharyl transferase (OST) complex that catalyzes the initial transfer of a defined glycan (Glc(3)Man(9)GlcNAc(2) in eukaryotes) from the lipid carrier dolichol-pyrophosphate to an asparagine residue within an Asn-X-Ser/Thr consensus motif in nascent polypeptide chains, the first step in protein N-glycosylation. N-glycosylation occurs cotranslationally and the complex associates with the Sec61 complex at the channel-forming translocon complex that mediates protein translocation across the endoplasmic reticulum (ER). All subunits are required for a maximal enzyme activity. In Canis lupus familiaris (Dog), this protein is Dolichyl-diphosphooligosaccharide--protein glycosyltransferase subunit TMEM258.